The following is a 320-amino-acid chain: Aristolochene synthase (320 aa).

Over residues 1 to 14 (MKKPNGTNGASSSL) the composition is skewed to polar residues. The tract at residues 1 to 20 (MKKPNGTNGASSSLEPPPST) is disordered. Mg(2+)-binding residues include aspartate 90, asparagine 219, serine 223, and glutamate 227. Residues arginine 314 and tyrosine 315 each contribute to the (2E,6E)-farnesyl diphosphate site.

Belongs to the terpene synthase family. Homodimer. Mg(2+) serves as cofactor.

It catalyses the reaction (2E,6E)-farnesyl diphosphate = (+)-aristolochene + diphosphate. Its pathway is sesquiterpene biosynthesis; aristolochene biosynthesis; aristolochene from farnesyl diphosphate: step 1/1. Functionally, catalyzes the cyclization of trans,trans-farnesyl diphosphate (FPP) to the bicyclic sesquiterpene aristolochene. Produces germacrene A as an enzyme-bound intermediate that is not released by the enzyme, but is further cyclized to produce aristolochene. Aristolochene is the likely parent compound for a number of sesquiterpenoid toxins produced by filamentous fungi. The protein is Aristolochene synthase (Ari1) of Aspergillus terreus.